We begin with the raw amino-acid sequence, 573 residues long: Cytosolic 5'-nucleotidase 1B (573 aa).

The segment covering Met-1–Lys-11 has biased composition (basic residues). 2 disordered regions span residues Met-1–Glu-200 and Glu-218–Glu-238. Basic and acidic residues predominate over residues Asn-12–Gly-35. Polar residues predominate over residues Asn-60–Ala-73. Residues Ser-93–Ser-105 are compositionally biased toward low complexity. Polar residues predominate over residues Thr-115 to Gln-136. Composition is skewed to basic and acidic residues over residues Trp-161–Leu-174 and Asp-182–Pro-194. Residue Asp-428 is the Nucleophile of the active site.

This sequence belongs to the 5'-nucleotidase type 3 family. The cofactor is Mg(2+). Expressed at highest levels in testis. Also expressed in brain, skeletal muscle, kidney and heart.

The protein resides in the cytoplasm. It catalyses the reaction a ribonucleoside 5'-phosphate + H2O = a ribonucleoside + phosphate. The catalysed reaction is AMP + H2O = adenosine + phosphate. Its activity is regulated as follows. Activated by ADP. Functionally, catalyzes the hydrolysis of nucleotide monophosphates, releasing inorganic phosphate and the corresponding nucleoside, AMP is the major substrate. In Mus musculus (Mouse), this protein is Cytosolic 5'-nucleotidase 1B (Nt5c1b).